We begin with the raw amino-acid sequence, 412 residues long: Indian hedgehog B protein (412 aa).

Positions 1–23 are cleaved as a signal peptide; that stretch reads MRLSTAAALLTGFILAFSPAYDG. The N-palmitoyl cysteine moiety is linked to residue C24. 7 residues coordinate Ca(2+): E89, E90, D95, T125, E126, D129, and D131. The Zn(2+) site is built by H140, D147, and H182. G197 is lipidated: Cholesterol glycine ester.

It belongs to the hedgehog family. In terms of assembly, multimer. Interacts with BOC and CDON. Interacts with PTCH1. Interacts with glypican GPC3. Cholesterylation is required for N-product targeting to lipid rafts and multimerization. In terms of processing, the C-terminal domain displays an autoproteolysis activity and a cholesterol transferase activity. Both activities result in the cleavage of the full-length protein and covalent attachment of a cholesterol moiety to the C-terminal of the newly generated N-product. The N-product is the active species in both local and long-range signaling, whereas the C-product is degraded in the endoplasmic reticulum. Post-translationally, N-palmitoylation by HHAT of N-product is required for indian hedgehog protein N-product multimerization and full activity. As to expression, expressed exclusively in the notochord.

The protein localises to the cell membrane. Its subcellular location is the endoplasmic reticulum membrane. It localises to the golgi apparatus membrane. It is found in the secreted. It catalyses the reaction glycyl-L-cysteinyl-[protein] + cholesterol + H(+) = [protein]-C-terminal glycyl cholesterol ester + N-terminal L-cysteinyl-[protein]. Its function is as follows. Signal involved in the early induction and patterning of anterodorsal ectoderm, nervous system and somites. It is involved in the regulation of endochondral skeleton formation, and the development of retinal pigment epithelium (RPE), photoreceptors and periocular tissues. The C-terminal part of the indian hedgehog protein precursor displays an autoproteolysis and a cholesterol transferase activity. Both activities result in the cleavage of the full-length protein into two parts followed by the covalent attachment of a cholesterol moiety to the C-terminal of the newly generated N-product. Both activities occur in the endoplasmic reticulum. In terms of biological role, the dually lipidated indian hedgehog protein N-product is a morphogen which is essential for a variety of patterning events during development. Binds to the patched (PTCH1) receptor, which functions in association with smoothened (SMO), to activate the transcription of target genes. In the notochord, induces somite patterning and muscle pioneer differentiation. The protein is Indian hedgehog B protein (ihhb) of Danio rerio (Zebrafish).